A 51-amino-acid chain; its full sequence is Cyclic phosphodiesterase (51 aa).

Histidine 11 serves as the catalytic Proton donor/acceptor. Threonine 13 contributes to the substrate binding site. Catalysis depends on histidine 38, which acts as the Proton donor/acceptor. Serine 40 and tyrosine 43 together coordinate substrate.

The protein belongs to the 2H phosphoesterase superfamily. CPD1 family.

Its function is as follows. Hydrolyzes ADP-ribose 1'',2''-cyclic phosphate (Appr&gt;1) that is produced during tRNA splicing into ADP-ribose 1''-phosphate (Appr-1''p). The protein is Cyclic phosphodiesterase of Triticum aestivum (Wheat).